A 351-amino-acid polypeptide reads, in one-letter code: SKP1-like protein 21 (351 aa).

The interaction with the F-box domain of F-box proteins stretch occupies residues 108–167 (TSAADSLQLKPLVDLTSRALARIIEGKTPEEIREIFHLPDDLTEEEKLEPLKNTMDDPRI). Disordered regions lie at residues 216 to 240 (VKTSKSKKKNKKRKEQKNGSSNGTC) and 330 to 351 (VNFSINGNGTSRRLTGPAAGHK). A compositionally biased stretch (basic residues) spans 217 to 230 (KTSKSKKKNKKRKE). Polar residues predominate over residues 330–342 (VNFSINGNGTSRR).

The protein belongs to the SKP1 family. In terms of assembly, part of a SCF (SKP1-cullin-F-box) protein ligase complex. As to expression, expressed in young seedlings, roots, leaves, floral stems, inflorescences, and siliques.

Its subcellular location is the nucleus. The protein operates within protein modification; protein ubiquitination. In terms of biological role, involved in ubiquitination and subsequent proteasomal degradation of target proteins. Together with CUL1, RBX1 and a F-box protein, it forms a SCF E3 ubiquitin ligase complex. The functional specificity of this complex depends on the type of F-box protein. In the SCF complex, it serves as an adapter that links the F-box protein to CUL1. The chain is SKP1-like protein 21 (ASK21) from Arabidopsis thaliana (Mouse-ear cress).